The sequence spans 101 residues: Putative defensin-like protein 86 (101 aa).

An N-terminal signal peptide occupies residues 1 to 27; it reads MAITKMSSLIILSLMMLTFIYIPMISG. 4 disulfides stabilise this stretch: Cys-35–Cys-71, Cys-39–Cys-59, Cys-45–Cys-69, and Cys-49–Cys-70.

It belongs to the DEFL family.

The protein resides in the secreted. The sequence is that of Putative defensin-like protein 86 (LCR82) from Arabidopsis thaliana (Mouse-ear cress).